Here is a 130-residue protein sequence, read N- to C-terminus: Protachykinin-1 (130 aa).

The N-terminal stretch at 1–19 (MKILVAVAVFFLVSTQLSA) is a signal peptide. Positions 20–56 (EEIGANDDLNYWSDWSDSDQIKEALPEPFEHILQRIA) are excised as a propeptide. 2 positions are modified to methionine amide: Met68 and Met107.

The protein belongs to the tachykinin family. Post-translationally, the substance P form is cleaved at Pro-59 by the prolyl endopeptidase FAP (seprase) activity (in vitro). Substance P is also cleaved and degraded by Angiotensin-converting enzyme (ACE) and neprilysin (MME).

It localises to the secreted. Tachykinins are active peptides which excite neurons, evoke behavioral responses, are potent vasodilators and secretagogues, and contract (directly or indirectly) many smooth muscles. This is Protachykinin-1 (TAC1) from Mesocricetus auratus (Golden hamster).